We begin with the raw amino-acid sequence, 156 residues long: Small ribosomal subunit protein uS7 (156 aa).

This sequence belongs to the universal ribosomal protein uS7 family. In terms of assembly, part of the 30S ribosomal subunit. Contacts proteins S9 and S11.

One of the primary rRNA binding proteins, it binds directly to 16S rRNA where it nucleates assembly of the head domain of the 30S subunit. Is located at the subunit interface close to the decoding center, probably blocks exit of the E-site tRNA. This is Small ribosomal subunit protein uS7 from Leifsonia xyli subsp. xyli (strain CTCB07).